We begin with the raw amino-acid sequence, 880 residues long: Calcium-transporting ATPase lmo0841 (880 aa).

A run of 4 helical transmembrane segments spans residues 47–67 (LWKL…VIAA), 68–88 (LVQL…VLIV), 243–263 (LGLG…GRVL), and 271–291 (MATA…AAIP). Residues V287, A288, I290, and E292 each coordinate Ca(2+). Catalysis depends on D334, which acts as the 4-aspartylphosphate intermediate. Helical transmembrane passes span 681–701 (IAYL…ALVL), 707–727 (FTAL…AIAL), 756–776 (AVIS…YIGM), 819–839 (YVIG…LPGA), and 854–874 (WSIA…IKVV). Positions 716 and 720 each coordinate Ca(2+).

Belongs to the cation transport ATPase (P-type) (TC 3.A.3) family. Type IIA subfamily.

The protein resides in the cell membrane. It catalyses the reaction Ca(2+)(in) + ATP + H2O = Ca(2+)(out) + ADP + phosphate + H(+). With respect to regulation, phosphorylation is inhibited by EGTA and vanadate. ATPase activity is stimulated by Sr(2+). Inhibited by very high concentrations of cyclopiazonic acid (CPA). Functionally, catalyzes the hydrolysis of ATP coupled with the transport of calcium. The transport is electrogenic with a probable ATP:Ca(2+):H(+) stoichiometry of 1:1:1. May have an important role in survival of the bacterium when stressed by a combination of a high calcium concentration and alkaline pH. The protein is Calcium-transporting ATPase lmo0841 of Listeria monocytogenes serovar 1/2a (strain ATCC BAA-679 / EGD-e).